Consider the following 808-residue polypeptide: Glycerol-3-phosphate acyltransferase (808 aa).

The HXXXXD motif signature appears at 306 to 311; it reads HRSHMD.

Belongs to the GPAT/DAPAT family.

It localises to the cell inner membrane. The enzyme catalyses sn-glycerol 3-phosphate + an acyl-CoA = a 1-acyl-sn-glycero-3-phosphate + CoA. Its pathway is phospholipid metabolism; CDP-diacylglycerol biosynthesis; CDP-diacylglycerol from sn-glycerol 3-phosphate: step 1/3. The sequence is that of Glycerol-3-phosphate acyltransferase from Vibrio parahaemolyticus serotype O3:K6 (strain RIMD 2210633).